We begin with the raw amino-acid sequence, 455 residues long: Bifunctional protein GlmU (455 aa).

The pyrophosphorylase stretch occupies residues 1–225 (MNIVILAAGM…EWETLGVNSK (225 aa)). UDP-N-acetyl-alpha-D-glucosamine is bound by residues 6–9 (LAAG), Lys-20, Gln-71, 76–77 (GT), 98–100 (YGD), Gly-135, Glu-150, Asn-165, and Asn-223. Asp-100 is a binding site for Mg(2+). Asn-223 provides a ligand contact to Mg(2+). The linker stretch occupies residues 226-246 (VQLAELERIHQRNLAQQLLED). The tract at residues 247 to 455 (GVTLIDPARI…QRPVKQKKEG (209 aa)) is N-acetyltransferase. Arg-329 and Lys-347 together coordinate UDP-N-acetyl-alpha-D-glucosamine. His-359 (proton acceptor) is an active-site residue. Positions 362 and 373 each coordinate UDP-N-acetyl-alpha-D-glucosamine. Acetyl-CoA-binding positions include Ala-376, 382–383 (NY), Ser-401, Ala-419, and Arg-436.

The protein in the N-terminal section; belongs to the N-acetylglucosamine-1-phosphate uridyltransferase family. It in the C-terminal section; belongs to the transferase hexapeptide repeat family. In terms of assembly, homotrimer. Mg(2+) is required as a cofactor.

The protein resides in the cytoplasm. The catalysed reaction is alpha-D-glucosamine 1-phosphate + acetyl-CoA = N-acetyl-alpha-D-glucosamine 1-phosphate + CoA + H(+). The enzyme catalyses N-acetyl-alpha-D-glucosamine 1-phosphate + UTP + H(+) = UDP-N-acetyl-alpha-D-glucosamine + diphosphate. It participates in nucleotide-sugar biosynthesis; UDP-N-acetyl-alpha-D-glucosamine biosynthesis; N-acetyl-alpha-D-glucosamine 1-phosphate from alpha-D-glucosamine 6-phosphate (route II): step 2/2. The protein operates within nucleotide-sugar biosynthesis; UDP-N-acetyl-alpha-D-glucosamine biosynthesis; UDP-N-acetyl-alpha-D-glucosamine from N-acetyl-alpha-D-glucosamine 1-phosphate: step 1/1. Its pathway is bacterial outer membrane biogenesis; LPS lipid A biosynthesis. Functionally, catalyzes the last two sequential reactions in the de novo biosynthetic pathway for UDP-N-acetylglucosamine (UDP-GlcNAc). The C-terminal domain catalyzes the transfer of acetyl group from acetyl coenzyme A to glucosamine-1-phosphate (GlcN-1-P) to produce N-acetylglucosamine-1-phosphate (GlcNAc-1-P), which is converted into UDP-GlcNAc by the transfer of uridine 5-monophosphate (from uridine 5-triphosphate), a reaction catalyzed by the N-terminal domain. The protein is Bifunctional protein GlmU of Ralstonia pickettii (strain 12J).